The sequence spans 429 residues: Enolase (429 aa).

(2R)-2-phosphoglycerate is bound at residue Q162. Catalysis depends on E204, which acts as the Proton donor. The Mg(2+) site is built by D241, E283, and D310. The (2R)-2-phosphoglycerate site is built by K335, R364, S365, and K386. The active-site Proton acceptor is K335.

The protein belongs to the enolase family. Requires Mg(2+) as cofactor.

Its subcellular location is the cytoplasm. It localises to the secreted. The protein localises to the cell surface. The enzyme catalyses (2R)-2-phosphoglycerate = phosphoenolpyruvate + H2O. It functions in the pathway carbohydrate degradation; glycolysis; pyruvate from D-glyceraldehyde 3-phosphate: step 4/5. Catalyzes the reversible conversion of 2-phosphoglycerate (2-PG) into phosphoenolpyruvate (PEP). It is essential for the degradation of carbohydrates via glycolysis. In Mycobacterium tuberculosis (strain ATCC 25177 / H37Ra), this protein is Enolase.